Here is a 654-residue protein sequence, read N- to C-terminus: Probable Xaa-Pro aminopeptidase P (654 aa).

Residues aspartate 449, aspartate 460, glutamate 558, and glutamate 572 each coordinate Mn(2+).

This sequence belongs to the peptidase M24B family. Requires Mn(2+) as cofactor.

It catalyses the reaction Release of any N-terminal amino acid, including proline, that is linked to proline, even from a dipeptide or tripeptide.. In terms of biological role, catalyzes the removal of a penultimate prolyl residue from the N-termini of peptides. This is Probable Xaa-Pro aminopeptidase P (ampp) from Aspergillus fumigatus (strain CBS 144.89 / FGSC A1163 / CEA10) (Neosartorya fumigata).